A 166-amino-acid polypeptide reads, in one-letter code: MTAGTVVITGGILATVILLCIIAVLCYCRLQYYCCKKDESEEDEEEPDFAVHSHLPPLHSNRNLVLTNGPALYPTASTSFSQKSPQARALCRSCSHCEPPTFFLQEPPEEEEDVLNGGERVLYKSVSQEDVELPPGGFGGLQALNPNRLSAMREAFARSRSISTDV.

A helical membrane pass occupies residues 6 to 26 (VVITGGILATVILLCIIAVLC). A Phosphoserine modification is found at serine 40.

This sequence belongs to the FAM163 family.

The protein localises to the membrane. This chain is Protein FAM163B (FAM163B), found in Homo sapiens (Human).